Consider the following 462-residue polypeptide: Ribosomal oxygenase 2 (462 aa).

The tract at residues 1–24 (MPKKARPAGDGKEQGPAPKQVKVE) is disordered. Residues 139–271 (QPQRFKDELW…SSWGDFLLDT (133 aa)) form the JmjC domain. Fe cation is bound by residues histidine 179, aspartate 181, and histidine 240. At serine 308 the chain carries Phosphoserine.

It belongs to the ROX family. MINA53 subfamily. The cofactor is Fe(2+).

It is found in the nucleus. It localises to the nucleolus. It catalyses the reaction L-histidyl-[ribosomal protein uL15] + 2-oxoglutarate + O2 = (3S)-3-hydroxy-L-histidyl-[ribosomal protein uL15] + succinate + CO2. It carries out the reaction L-histidyl-[protein] + 2-oxoglutarate + O2 = (3S)-3-hydroxy-L-histidyl-[protein] + succinate + CO2. In terms of biological role, oxygenase that can act as both a histone lysine demethylase and a ribosomal histidine hydroxylase. Is involved in the demethylation of trimethylated 'Lys-9' on histone H3 (H3K9me3), leading to an increase in ribosomal RNA expression. Also catalyzes the hydroxylation of 60S ribosomal protein L27a on 'His-39'. May play an important role in cell growth and survival. May be involved in ribosome biogenesis, most likely during the assembly process of pre-ribosomal particles. The protein is Ribosomal oxygenase 2 (RIOX2) of Bos taurus (Bovine).